A 556-amino-acid chain; its full sequence is MKNDIEIAQSAKMEPIINIAKKIGLEEDDIELYGKYKCKISLDVIKRLENNKDGKLVLVTAINPTPAGEGKSTVTVGLGQALNKIGKNTVIALREPSLGPVFGIKGGAAGGGYAQVVPMEDINLHFTGDMHAITSANNLLCAAIDNHIHQGNLLRIDSRRIVFKRVMDMNDRALRNIVVGMGGKINGFLREDGFMITVASEIMAILCMASDLEDLKERMGNILIAYNLDGEPVYAKELEIEGAMALLMKDAIKPNLVQTLENTPAIIHGGPFANIAHGCNSIIATKTALKMSDITITEAGFGADLGAEKFLDIKCRYGNLNPDCVVLVATIRALKHHGGVKKDELNISNVDALNKGMKNLEKQIENIKAYGVPVVVAINKFITDSDEEVKAIEDFCKNIGVEVSLTEVWEKGGEGGIDLANKVIKTMENEPSNFKMIYDSEESIKDKILKIVQTIYGGKGVNYTPQALKQIAEIEKFNLDKLPICMAKTQYSLSDNPSLLGRPENFDITIKEVRVSNGAGFIVVLTGDVMTMPGLPKVPAANRMDIKDNGEIVGLF.

65 to 72 serves as a coordination point for ATP; sequence TPAGEGKS.

It belongs to the formate--tetrahydrofolate ligase family.

The enzyme catalyses (6S)-5,6,7,8-tetrahydrofolate + formate + ATP = (6R)-10-formyltetrahydrofolate + ADP + phosphate. Its pathway is one-carbon metabolism; tetrahydrofolate interconversion. This Clostridium perfringens (strain SM101 / Type A) protein is Formate--tetrahydrofolate ligase.